Here is a 504-residue protein sequence, read N- to C-terminus: TGF-beta-activated kinase 1 and MAP3K7-binding protein 1 (504 aa).

Residues 1-22 (MAAQRRSLLQSEQQPSWTDDLP) are disordered. Position 7 is a phosphoserine (Ser7). Polar residues predominate over residues 7 to 17 (SLLQSEQQPSW). The PPM-type phosphatase domain occupies 28–365 (GVGSASNRSY…EDMTLLVRNF (338 aa)). Ser378 is modified (phosphoserine). An O-linked (GlcNAc) serine glycan is attached at Ser395. Ser423 carries the post-translational modification Phosphoserine; by MAPK14. A compositionally biased stretch (polar residues) spans 430 to 439 (ATPTLTNQSP). The disordered stretch occupies residues 430 to 478 (ATPTLTNQSPTLTLQSTNTHTQSSSSSSDGGLFRSRPAHSLPPGEDGRV). The residue at position 431 (Thr431) is a Phosphothreonine; by MAPK14. Ser438 carries the post-translational modification Phosphoserine; by MAPK14. A compositionally biased stretch (low complexity) spans 440-457 (TLTLQSTNTHTQSSSSSS). A Phosphothreonine modification is found at Thr442.

As to quaternary structure, interacts with XIAP and BIRC7. Interacts with TRAF6 and MAP3K7; during IL-1 signaling. Identified in the TRIKA2 complex composed of MAP3K7, TAB1 and TAB2. Interacts with TRAF6 and MAPK14; these interactions allow MAPK14 autophosphorylation. Interacts with STING1; interaction takes place following cGAMP activation and promotes TAB1 recruitment to the endoplasmic reticulum, triggering MAP3K7/TAK1 activation and STING1 phosphorylation. In terms of processing, phosphorylated at all three sites Ser-423, Thr-431 and Ser-438 by MAPK14 when cells were exposed to cellular stresses, or stimulated with TNF-alpha, IL1 or LPS. These phosphorylations inhibit TAK1 activation by a feedback control mechanism. Dephosphorylated by DUSP14 at Ser-438, leading to TAB1-MAP3K7/TAK1 complex inactivation in T-cells. Post-translationally, ubiquitinated by MAP3K1 with 'Lys-63'-linked polyubiquitin; leading to activation of TAK1 and of JNK and p38 MAP kinases following EGF and TGF-beta stimulation. Ubiquitinated by ITCH with 'Lys-48'-linked polyubiquitin; leading to proteasomal degradation. Ubiquitinated by RNF114 during maternal-to-zygotic transition; leading to degradation. (Microbial infection) Deubiquitinated by Y.enterocolitica YopP. In terms of processing, O-GlcNAcylated at Ser-395 by OGT is required for full MAP3K7/TAK1 activation upon stimulation with IL-1 or osmotic stress. Deglycosylated at Ser-395 by OGA. As to expression, ubiquitous.

The protein resides in the cytoplasm. It is found in the cytosol. Its subcellular location is the endoplasmic reticulum membrane. Its function is as follows. Key adapter protein that plays an essential role in JNK and NF-kappa-B activation and proinflammatory cytokines production in response to stimulation with TLRs and cytokines. Mechanistically, associates with the catalytic domain of MAP3K7/TAK1 to trigger MAP3K7/TAK1 autophosphorylation leading to its full activation. Similarly, associates with MAPK14 and triggers its autophosphorylation and subsequent activation. In turn, MAPK14 phosphorylates TAB1 and inhibits MAP3K7/TAK1 activation in a feedback control mechanism. Also plays a role in recruiting MAPK14 to the TAK1 complex for the phosphorylation of the TAB2 and TAB3 regulatory subunits. This chain is TGF-beta-activated kinase 1 and MAP3K7-binding protein 1 (TAB1), found in Homo sapiens (Human).